We begin with the raw amino-acid sequence, 106 residues long: Ferredoxin (106 aa).

Positions 8 and 16 each coordinate [3Fe-4S] cluster. Residues Cys20, Cys39, Cys42, and Cys45 each contribute to the [4Fe-4S] cluster site. Residues 30–59 (RMLYIHPDECVDCGACEPVCPVEAIYYEDD) form the 4Fe-4S ferredoxin-type domain. Cys49 contacts [3Fe-4S] cluster. Residues 81 to 106 (PGGASKVGQTDNDPQAIKDLPPQGED) form a disordered region.

[4Fe-4S] cluster is required as a cofactor. It depends on [3Fe-4S] cluster as a cofactor.

Functionally, ferredoxins are iron-sulfur proteins that transfer electrons in a wide variety of metabolic reactions. This is Ferredoxin (fdxA) from Mycolicibacterium smegmatis (Mycobacterium smegmatis).